Here is a 617-residue protein sequence, read N- to C-terminus: BTB/POZ domain-containing protein At3g08570 (617 aa).

In terms of domain architecture, BTB spans 36–106; the sequence is GDITIVVDGE…CYGINFEITI (71 aa). One can recognise an NPH3 domain in the interval 210–490; it reads EWWIEDLSAL…VRVLYSEQLR (281 aa). Tyr431 is subject to Phosphotyrosine. Disordered stretches follow at residues 505–525 and 585–617; these read LSSQKHSSENPSRAVSPRDTY and GGGPTEGKLRNANRKSKSRLERKTVRSRPESMF. Residues 602 to 617 show a composition bias toward basic and acidic residues; the sequence is SRLERKTVRSRPESMF.

It belongs to the NPH3 family.

It participates in protein modification; protein ubiquitination. May act as a substrate-specific adapter of an E3 ubiquitin-protein ligase complex (CUL3-RBX1-BTB) which mediates the ubiquitination and subsequent proteasomal degradation of target proteins. The protein is BTB/POZ domain-containing protein At3g08570 of Arabidopsis thaliana (Mouse-ear cress).